Consider the following 86-residue polypeptide: Large ribosomal subunit protein eL20 (86 aa).

Belongs to the eukaryotic ribosomal protein eL20 family. Part of the 50S ribosomal subunit. Binds 23S rRNA.

The protein is Large ribosomal subunit protein eL20 of Saccharolobus islandicus (strain Y.N.15.51 / Yellowstone #2) (Sulfolobus islandicus).